Here is a 713-residue protein sequence, read N- to C-terminus: B3 domain-containing transcription factor VAL3 (713 aa).

Residues 328-427 constitute a DNA-binding region (TF-B3); it reads FEKILSATDT…KLILGFRKAS (100 aa). 2 disordered regions span residues 459–478 and 616–713; these read VECSSGKKKSSMMITRSKRQ and LNSD…TSSM. A compositionally biased stretch (basic residues) spans 464-477; the sequence is GKKKSSMMITRSKR. Residues 616–629 are compositionally biased toward polar residues; it reads LNSDNGLHQSANNS. The span at 663-674 shows a compositional bias: basic and acidic residues; it reads TKSETLPHDDTV. Over residues 676–688 the composition is skewed to low complexity; sequence SSFTSPSSSSAHS. Over residues 690 to 700 the composition is skewed to basic and acidic residues; sequence NNKEDEGKLKT. The span at 701–713 shows a compositional bias: low complexity; the sequence is TTEIADTTTTSSM.

It is found in the nucleus. Its function is as follows. May be involved in plant development. The polypeptide is B3 domain-containing transcription factor VAL3 (VAL3) (Arabidopsis thaliana (Mouse-ear cress)).